We begin with the raw amino-acid sequence, 321 residues long: Ribonuclease Z (321 aa).

7 residues coordinate Zn(2+): H62, H64, D66, H67, H139, D209, and H268. D66 serves as the catalytic Proton acceptor.

It belongs to the RNase Z family. Homodimer. It depends on Zn(2+) as a cofactor.

The enzyme catalyses Endonucleolytic cleavage of RNA, removing extra 3' nucleotides from tRNA precursor, generating 3' termini of tRNAs. A 3'-hydroxy group is left at the tRNA terminus and a 5'-phosphoryl group is left at the trailer molecule.. Functionally, zinc phosphodiesterase, which displays some tRNA 3'-processing endonuclease activity. Probably involved in tRNA maturation, by removing a 3'-trailer from precursor tRNA. The protein is Ribonuclease Z of Pseudomonas putida (strain W619).